Reading from the N-terminus, the 412-residue chain is uncharacterized protein (412 aa).

Polar residues predominate over residues 1-17 (MPSQGNNKNSENITQNP). Disordered stretches follow at residues 1–20 (MPSQ…PIEG), 223–243 (EQAV…ARQT), and 310–412 (QKQM…NPVA). The span at 340-355 (KLNSNTRGSSKRPSVN) shows a compositional bias: polar residues. A compositionally biased stretch (gly residues) spans 361–379 (GQRGRGGRGFYRGGRGRGG). The segment covering 390-402 (SNSNNSTSQPSPN) has biased composition (low complexity). Positions 403 to 412 (AELSNFNPVA) are enriched in polar residues.

This is an uncharacterized protein from Schizosaccharomyces pombe (strain 972 / ATCC 24843) (Fission yeast).